The chain runs to 215 residues: Ras-related protein SEC4 (215 aa).

Glycine 27–serine 34 is a GTP binding site. Positions phenylalanine 49–phenylalanine 57 match the Effector region motif. GTP contacts are provided by residues aspartate 75–glutamine 79 and asparagine 133–aspartate 136. Phosphoserine is present on residues serine 201 and serine 204. 2 S-geranylgeranyl cysteine lipidation sites follow: cysteine 214 and cysteine 215.

This sequence belongs to the small GTPase superfamily. Rab family. As to quaternary structure, interacts with the guanyl-nucleotide exchange factor SEC2. Interacts with SRO7, YIF1, YIP3, YIP4 and YIP5.

Its subcellular location is the cytoplasmic vesicle. The protein resides in the secretory vesicle membrane. It localises to the cell membrane. The protein localises to the cytoplasm. Involved in exocytosis. Maybe by regulating the binding and fusion of secretory vesicles with the cell surface. The GTP-bound form of SEC4 may interact with an effector, thereby stimulating its activity and leading to exocytotic fusion. SEC4 may be an upstream activator of the 19.5S SEC8/SEC15 particle. SEC4 probably interacts directly with SEC8; it could serve as the attachment site for the SEC8/SEC15 particle. This is Ras-related protein SEC4 (SEC4) from Saccharomyces cerevisiae (strain ATCC 204508 / S288c) (Baker's yeast).